The chain runs to 77 residues: Surfactant-associated protein 2 (77 aa).

A signal peptide spans Met1 to Ala19. Asn61 carries an N-linked (GlcNAc...) asparagine glycan.

Post-translationally, N-glycosylated. In terms of tissue distribution, expressed in lung, and specifically in alveolar type II epithelial cells.

The protein resides in the secreted. Its subcellular location is the cytoplasmic vesicle. The protein localises to the secretory vesicle. It localises to the golgi apparatus. Functionally, putative surfactant protein. In Mus musculus (Mouse), this protein is Surfactant-associated protein 2.